A 447-amino-acid polypeptide reads, in one-letter code: Dimethylsulfoniopropionate lyase DddP (447 aa).

A disordered region spans residues 1 to 26 (MNRHFNATRKIDPSRGATLGDGSPND). A divalent metal cation contacts are provided by D295, D297, D307, H371, E406, and E421.

The protein belongs to the peptidase M24B family. In terms of assembly, homodimer. It depends on a divalent metal cation as a cofactor.

It carries out the reaction S,S-dimethyl-beta-propiothetin = acrylate + dimethyl sulfide + H(+). Functionally, able to cleave dimethylsulfoniopropionate (DMSP), releasing dimethyl sulfide (DMS). DMS is the principal form by which sulfur is transported from oceans to the atmosphere. The real activity of the protein is however subject to debate and it is unclear whether it constitutes a real dimethylsulfoniopropionate lyase in vivo: the low activity with DMSP as substrate suggests that DMSP is not its native substrate. The protein is Dimethylsulfoniopropionate lyase DddP of Roseobacter denitrificans (strain ATCC 33942 / OCh 114) (Erythrobacter sp. (strain OCh 114)).